The primary structure comprises 281 residues: Bis(5'-nucleosyl)-tetraphosphatase, symmetrical (281 aa).

This sequence belongs to the Ap4A hydrolase family.

It catalyses the reaction P(1),P(4)-bis(5'-adenosyl) tetraphosphate + H2O = 2 ADP + 2 H(+). Functionally, hydrolyzes diadenosine 5',5'''-P1,P4-tetraphosphate to yield ADP. The chain is Bis(5'-nucleosyl)-tetraphosphatase, symmetrical from Pectobacterium atrosepticum (strain SCRI 1043 / ATCC BAA-672) (Erwinia carotovora subsp. atroseptica).